The chain runs to 137 residues: Putative pre-16S rRNA nuclease (137 aa).

The protein belongs to the YqgF nuclease family.

It localises to the cytoplasm. In terms of biological role, could be a nuclease involved in processing of the 5'-end of pre-16S rRNA. The protein is Putative pre-16S rRNA nuclease of Anaeromyxobacter dehalogenans (strain 2CP-1 / ATCC BAA-258).